Consider the following 726-residue polypeptide: MRSNTFGSVMRISWVVAFITMVQTLVSGVPLTDNDLESEVSKGTWFIKYYLPSCGACKRLGPMWDNMVEKAKEQVEGSNFHFGEVDCSKELSSCANIRAVPTLYLYQNGEIVEEVPFGASTSEASLLDFVETHLNPDTDPDIPSDEDVLTDEDTEEVASIQPALSTSVSSLSLASTAMSKSASASEFSGSSVTKASKKLTSSPTSVASKKATLSSVSKVASTSSLPVTSVSASVDPKSAASKVQDAEFSIQTAPSFPKEKEEKENTEETEESKKSINPTGTSKALALDADIDAALTDKEGWFIQFYSSECDDCDDVSTAWYAMANRMRGKLNVAHINCAVSKRACKQYSIQYFPTFLFFKEEAFVEYVGLPNEGDLVSFAEEAANFEIREVELLDTVNAEKNGDVFFLYFYDDDSAEYLNIIRKTGIQLLGHANLYLTTSQQIAKKYRVVSFPKLIVVRDGIASYYPAKMAQDNKDYRRILGWMKNNWLPVLPELRTSNSKEIFNDESVVLFLLNPELDDFDETKRTAQKIATEFLDEEGRTYQSNWQKETDKKNSLVNEAEEKNDLEAIEAAKNFHVNGKPSPTRFAWVNGKFWAQWLRKFDIDIEATGPRVIVYNAAQDIYWDETAKGTPISIEKDTVFDIIKQVETDPDHLKFKILKKNLGVEYLESYGLNIRVLYMVLGIVTVGILVWYFSGRRARTLQRRRHSTPILPVSMRSTGNSGKFD.

In terms of domain architecture, Thioredoxin spans Met-10–Asn-135. 2 disordered regions span residues His-133 to Asp-153 and Val-227 to Gly-280. The span at Thr-138–Asp-153 shows a compositional bias: acidic residues. The helical transmembrane segment at Ile-675–Ser-695 threads the bilayer. Ser-708 bears the Phosphoserine mark.

It is found in the membrane. This is an uncharacterized protein from Schizosaccharomyces pombe (strain 972 / ATCC 24843) (Fission yeast).